A 370-amino-acid polypeptide reads, in one-letter code: Homospermidine synthase 2 (370 aa).

The protein belongs to the deoxyhypusine synthase family. Homotetramer. NAD(+) is required as a cofactor. The N-terminus is blocked. Expressed in roots.

The catalysed reaction is putrescine + spermidine = sym-homospermidine + propane-1,3-diamine. Its pathway is alkaloid biosynthesis; pyrrolizidine alkaloid biosynthesis. Catalyzes the transfer of an aminobutyl unit from spermidine onto putrescine. The resulting polyamine homospermidine is a precursor in the biosynthesis of pyrrolizidine alkaloids. The chain is Homospermidine synthase 2 from Senecio vernalis (Spring groundsel).